Reading from the N-terminus, the 179-residue chain is CASP-like protein 5A2 (179 aa).

Topologically, residues 1–54 are cytoplasmic; it reads MEATSHPAVHPVAVPPQFQGAGPPAIQMKDFPGSPGTAGGLALRFTQFGFSLIS. The next 2 membrane-spanning stretches (helical) occupy residues 55 to 75 and 76 to 96; these read LCIMVSIAGFSSVTAFCFLVA and TMVFQCIWSLCLGALDIYALL. The Cytoplasmic segment spans residues 97–114; sequence TQRSFRNPLIVSLFVVGD. Residues 115-135 traverse the membrane as a helical segment; sequence WVTSTMTFAGACAAAGITVLI. Over 136-154 the chain is Extracellular; sequence DNDLEQCGPNHCGRFEAAA. Residues 155 to 175 form a helical membrane-spanning segment; sequence AMAFMSWTATTLSFCLSFWLL. Residues 176–179 are Cytoplasmic-facing; the sequence is ASCR.

This sequence belongs to the Casparian strip membrane proteins (CASP) family. Homodimer and heterodimers.

It is found in the cell membrane. This chain is CASP-like protein 5A2, found in Physcomitrium patens (Spreading-leaved earth moss).